We begin with the raw amino-acid sequence, 100 residues long: Small ribosomal subunit protein uS14c (100 aa).

Belongs to the universal ribosomal protein uS14 family. Part of the 30S ribosomal subunit.

It localises to the plastid. Functionally, binds 16S rRNA, required for the assembly of 30S particles. The polypeptide is Small ribosomal subunit protein uS14c (rps14) (Cuscuta gronovii (Common dodder)).